A 2703-amino-acid chain; its full sequence is Neurogenic locus Notch protein (2703 aa).

The signal sequence occupies residues Met1–Gly52. Over Thr53–Tyr1745 the chain is Extracellular. EGF-like domains lie at Val58 to Glu95, His96 to Glu136, Val139 to Glu176, and Thr177 to Ser215. Intrachain disulfides connect Cys62–Cys73, Cys67–Cys83, Cys85–Cys94, Cys100–Cys111, Cys105–Cys124, Cys126–Cys135, Cys143–Cys154, Cys148–Cys164, Cys166–Cys175, Cys181–Cys192, Cys186–Cys203, Cys205–Cys214, Cys221–Cys232, Cys226–Cys241, Cys243–Cys252, Cys259–Cys270, Cys264–Cys279, Cys281–Cys290, Cys297–Cys308, Cys302–Cys317, Cys319–Cys328, Cys335–Cys349, Cys343–Cys358, and Cys360–Cys369. An O-linked (Fuc...) threonine glycan is attached at Thr72. Thr110 carries an O-linked (Fuc...) threonine glycan. Thr153 carries an O-linked (Fuc...) threonine glycan. Ser183 is a glycosylation site (O-linked (Glc...) serine). Residue Thr191 is glycosylated (O-linked (Fuc...) threonine). Thr210 carries an O-linked (GlcNAc...) threonine glycan. One can recognise an EGF-like 5; calcium-binding domain in the interval Asp217–Asp253. Residue Ser223 is glycosylated (O-linked (Glc...) serine). Thr231 carries an O-linked (Fuc...) threonine glycan. The 37-residue stretch at Lys255 to Glu291 folds into the EGF-like 6 domain. The EGF-like 7; calcium-binding domain maps to Asn293–Gln329. Thr307 carries an O-linked (Fuc...) threonine glycan. N-linked (GlcNAc...) asparagine glycosylation is present at Asn322. One can recognise an EGF-like 8; calcium-binding domain in the interval Asp331 to Ser370. Thr348 carries an O-linked (Fuc...) threonine glycan. The N-linked (GlcNAc...) asparagine glycan is linked to Asn371. One can recognise an EGF-like 9; calcium-binding domain in the interval Asn372 to His408. 8 disulfide bridges follow: Cys376/Cys387, Cys381/Cys396, Cys398/Cys407, Cys413/Cys424, Cys418/Cys435, Cys437/Cys446, Cys453/Cys465, and Cys459/Cys474. Residue Thr386 is glycosylated (O-linked (Fuc...) threonine). An EGF-like 10 domain is found at Leu409–Ser447. The O-linked (Glc...) serine glycan is linked to Ser427. An N-linked (GlcNAc...) asparagine glycan is attached at Asn430. Residues Asp449 to Glu486 form the EGF-like 11; calcium-binding domain. A glycan (N-linked (GlcNAc...) asparagine) is linked at Asn475. 78 disulfide bridges follow: Cys476–Cys485, Cys492–Cys503, Cys497–Cys512, Cys514–Cys523, Cys530–Cys541, Cys535–Cys550, Cys552–Cys561, Cys568–Cys579, Cys573–Cys588, Cys590–Cys599, Cys606–Cys616, Cys611–Cys625, Cys627–Cys636, Cys643–Cys654, Cys648–Cys663, Cys665–Cys674, Cys681–Cys692, Cys686–Cys701, Cys703–Cys712, Cys719–Cys730, Cys724–Cys739, Cys741–Cys750, Cys757–Cys768, Cys762–Cys777, Cys779–Cys788, Cys795–Cys806, Cys800–Cys815, Cys817–Cys826, Cys833–Cys844, Cys838–Cys853, Cys855–Cys864, Cys871–Cys882, Cys876–Cys893, Cys895–Cys904, Cys911–Cys923, Cys917–Cys932, Cys934–Cys943, Cys950–Cys961, Cys955–Cys970, Cys972–Cys981, Cys988–Cys999, Cys993–Cys1008, Cys1010–Cys1019, Cys1026–Cys1037, Cys1031–Cys1046, Cys1048–Cys1057, Cys1064–Cys1075, Cys1069–Cys1084, Cys1086–Cys1095, Cys1102–Cys1113, Cys1107–Cys1122, Cys1124–Cys1133, Cys1155–Cys1160, Cys1171–Cys1180, Cys1187–Cys1198, Cys1192–Cys1207, Cys1209–Cys1218, Cys1225–Cys1236, Cys1230–Cys1245, Cys1247–Cys1256, Cys1263–Cys1274, Cys1268–Cys1283, Cys1285–Cys1294, Cys1301–Cys1314, Cys1306–Cys1323, Cys1325–Cys1334, Cys1341–Cys1352, Cys1346–Cys1361, Cys1363–Cys1372, Cys1379–Cys1389, Cys1384–Cys1400, Cys1402–Cys1411, Cys1419–Cys1430, Cys1424–Cys1439, Cys1441–Cys1450, Cys1482–Cys1505, Cys1487–Cys1500, and Cys1496–Cys1512. Thr481 carries an O-linked (GlcNAc...) threonine glycan. The EGF-like 12; calcium-binding domain maps to Asn488 to Glu524. Ser494 carries O-linked (Glc...) serine glycosylation. A glycan (O-linked (Fuc...) serine) is linked at Ser502. An O-linked (GlcNAc...) threonine glycan is attached at Thr519. Residues Asp526 to Gln562 enclose the EGF-like 13; calcium-binding domain. O-linked (Glc...) serine glycosylation is present at Ser532. The EGF-like 14; calcium-binding domain occupies Asn564–Glu600. An O-linked (Glc...) serine glycan is attached at Ser570. O-linked (GlcNAc...) threonine glycosylation is present at Thr595. An EGF-like 15; calcium-binding domain is found at Asn602–Gln637. A glycan (O-linked (Glc...) serine) is linked at Ser608. Residues Gln639–Glu675 enclose the EGF-like 16; calcium-binding domain. O-linked (Glc...) serine glycosylation is present at Ser645. The region spanning Asn677 to Glu713 is the EGF-like 17; calcium-binding domain. A glycan (O-linked (Glc...) serine) is linked at Ser683. O-linked (Fuc...) threonine glycosylation occurs at Thr691. Residues Asn715 to Leu751 form the EGF-like 18; calcium-binding domain. Ser721 carries O-linked (Glc...) serine glycosylation. Residues Asp753 to Glu789 enclose the EGF-like 19; calcium-binding domain. Ser759 is a glycosylation site (O-linked (Glc...) serine). An EGF-like 20; calcium-binding domain is found at Asp791 to Glu827. A glycan (O-linked (Glc...) serine) is linked at Ser797. The O-linked (Fuc...) threonine glycan is linked to Thr805. O-linked (GlcNAc...) threonine glycosylation occurs at Thr822. Residues Asn829 to Glu865 enclose the EGF-like 21; calcium-binding domain. A glycan (O-linked (Fuc...) threonine) is linked at Thr843. Residues Lys867–Asp905 enclose the EGF-like 22 domain. An EGF-like 23; calcium-binding domain is found at Asp907–Ala944. Ser922 carries O-linked (Fuc...) serine glycosylation. The region spanning Asn946–Glu982 is the EGF-like 24; calcium-binding domain. Ser952 carries an O-linked (Glc...) serine glycan. The O-linked (Fuc...) threonine glycan is linked to Thr960. In terms of domain architecture, EGF-like 25 spans Asp984–Gln1020. O-linked (Glc...) serine glycosylation is present at Ser990. Thr998 carries O-linked (Fuc...) threonine glycosylation. In terms of domain architecture, EGF-like 26; calcium-binding spans Asn1022–Gln1058. O-linked (Fuc...) serine glycosylation occurs at Ser1036. Residue Asn1045 is glycosylated (N-linked (GlcNAc...) asparagine). EGF-like domains follow at residues Lys1060–Ser1096, Tyr1098–Asp1134, and Gln1136–Gln1181. O-linked (Glc...) serine glycosylation occurs at Ser1066. Thr1074 is a glycosylation site (O-linked (Fuc...) threonine). Thr1112 carries O-linked (Fuc...) threonine glycosylation. A glycan (N-linked (GlcNAc...) asparagine) is linked at Asn1157. One can recognise an EGF-like 30; calcium-binding domain in the interval Glu1183–Glu1219. Ser1189 carries O-linked (Glc...) serine glycosylation. The O-linked (Fuc...) threonine glycan is linked to Thr1197. Positions Asn1221–Glu1257 constitute an EGF-like 31; calcium-binding domain. Residue Thr1235 is glycosylated (O-linked (Fuc...) threonine). Asn1242 carries an N-linked (GlcNAc...) asparagine glycan. The 37-residue stretch at Asn1259–Glu1295 folds into the EGF-like 32; calcium-binding domain. N-linked (GlcNAc...) asparagine glycosylation occurs at Asn1271. Ser1273 is a glycosylation site (O-linked (Fuc...) serine). 4 EGF-like domains span residues Asp1297–Glu1335, Lys1337–Glu1373, Ser1375–Glu1412, and Thr1415–Asp1451. The O-linked (Glc...) serine glycan is linked to Ser1303. Residue Ser1381 is glycosylated (O-linked (Glc...) serine). LNR repeat units lie at residues Cys1482–Asn1521, Cys1522–Lys1557, and Cys1559–Pro1599. N-linked (GlcNAc...) asparagine glycosylation occurs at Asn1521. Intrachain disulfides connect Cys1522-Cys1545, Cys1527-Cys1540, Cys1536-Cys1552, Cys1559-Cys1585, Cys1567-Cys1580, and Cys1576-Cys1592. Asn1594 and Asn1627 each carry an N-linked (GlcNAc...) asparagine glycan. The chain crosses the membrane as a helical span at residues Val1746–Thr1766. The Cytoplasmic segment spans residues Gln1767–Ile2703. The interval Gln1810–Tyr1850 is disordered. ANK repeat units lie at residues Cys1901–Ala1945, Thr1950–Cys1979, Thr1983–Ala2013, Asp2017–Ala2046, Ser2050–Ala2079, Lys2083–Ile2112, and Met2116–His2139. The tract at residues Thr2172 to Gly2257 is disordered. Residues Lys2228–Ala2238 are compositionally biased toward low complexity. The segment at Pro2325–Tyr2328 is interaction with Nedd4. Disordered regions lie at residues Ser2399–Pro2452, Gly2488–Gln2524, Leu2579–Gln2620, and Pro2632–Ile2703. A compositionally biased stretch (polar residues) spans Pro2414 to Ala2429. Ser2447 bears the Phosphoserine mark. The span at Gly2488 to Gln2497 shows a compositional bias: gly residues. Positions Pro2598–Ser2619 are enriched in low complexity. Residues Pro2632–Pro2653 are compositionally biased toward polar residues. The segment covering Ser2659 to Ser2675 has biased composition (low complexity). A compositionally biased stretch (polar residues) spans Gly2677–Tyr2687.

This sequence belongs to the NOTCH family. Homomer. Interacts with Su(H) when activated. Interacts with Dx via its ANK repeats. Interacts with Delta via the EGF repeats and the Delta EGF repeats. Interacts with Nedd4 and Su(dx). Interacts with O-fut1; the interaction glycosylates N and transports N to early endosomes. Interacts with Akap200; the interaction stabilizes N/Notch protein levels by preventing Cbl-mediated ubiquitination and subsequent lysosomal degradation of N/Notch. Post-translationally, upon binding its ligands such as Delta or Serrate, it is cleaved (S2 cleavage) in its extracellular domain, close to the transmembrane domain. S2 cleavage is probably mediated by Kuz. It is then cleaved (S3 cleavage) downstream of its transmembrane domain, releasing it from the cell membrane. S3 cleavage requires Psn. O-glycosylated. Three forms of O-glycosylation (O-fucosylation, O-glucosylation and O-GlcNAcylation) are detected. O-fucosylated by O-fut1 and fng in the EGF repeat domain inhibits both Serrate/Ser- and Delta/Dl-binding. O-glucosylation by rumi in the endoplasmic reticulum is necessary for correct folding and signaling. In terms of processing, ubiquitinated by various ubiquitin ligases; which promotes ligand-independent endocytosis and proteasomal degradation. Ubiquitinated by Nedd4. May also be ubiquitinated by Su(dx) and Cbl. Mono-ubiquitinated, possibly by dx/deltex; this may be involved in the ESCRT-III mediated targeting to multivesicular bodies.

Its subcellular location is the cell membrane. The protein localises to the endosome. It is found in the multivesicular body. It localises to the nucleus. Essential signaling protein which has a major role in many developmental processes. Functions as a receptor for membrane-bound ligands Delta and Serrate to regulate cell-fate determination. Upon ligand activation, and releasing from the cell membrane, the Notch intracellular domain (NICD) forms a transcriptional activator complex with Su(H) (Suppressor of hairless) and activates genes of the E(spl) complex. Regulates oogenesis, the differentiation of the ectoderm and the development of the central and peripheral nervous system, eye, wing disk, muscles and segmental appendages such as antennae and legs, through lateral inhibition or induction. Regulates neuroblast self-renewal, identity and proliferation through the regulation of bHLH-O proteins; in larval brains, involved in the maintenance of type II neuroblast self-renewal and identity by suppressing erm expression together with pnt; might also regulate dpn expression through the activation of the transcriptional regulator Su(H). Targeted for ESCRT-mediated endosomal sequestration and lysosomal degradation by various E3 ubiquitin ligases to regulate the Notch signaling pathway. Can undergo ligand-dependent and non-canonical ligand-independent activation. Ligand-independent activation is dependent on endosome acidification and probably occurs in late endosomes or lysosome. Ectopic ligand-independent activation occurs when disruption of the endolysosomal pathway, particularly of the ESCRT-III complex, prevents sequestration of the receptor in intraluminal vesicles of multivesicular bodies. The protein is Neurogenic locus Notch protein of Drosophila melanogaster (Fruit fly).